Consider the following 257-residue polypeptide: Short-chain dehydrogenase reductase 3a (257 aa).

Ile-12–Val-36 contributes to the NAD(+) binding site. Residue Ser-144 participates in substrate binding. The active-site Proton acceptor is Tyr-157.

The protein belongs to the short-chain dehydrogenases/reductases (SDR) family. As to expression, highly expressed in the radicle tip, lateral root primordia and tips, and the area surrounding the cotyledon hydathode of young seedlings.

Functionally, confers resistance to the incompatible pathogenic bacteria P.syringae pv. tomato DC3000 in a PR1-dependent manner. Seems not involved in abscisic acid (ABA) biosynthesis. In Arabidopsis thaliana (Mouse-ear cress), this protein is Short-chain dehydrogenase reductase 3a (SDR3a).